Here is a 296-residue protein sequence, read N- to C-terminus: Light-independent protochlorophyllide reductase iron-sulfur ATP-binding protein (296 aa).

ATP-binding positions include 39–44 (GIGKST) and Lys68. Mg(2+) is bound at residue Ser43. Residues Cys124 and Cys158 each coordinate [4Fe-4S] cluster. 209 to 210 (NR) contacts ATP.

This sequence belongs to the NifH/BchL/ChlL family. Homodimer. Protochlorophyllide reductase is composed of three subunits; ChlL, ChlN and ChlB. It depends on [4Fe-4S] cluster as a cofactor.

It catalyses the reaction chlorophyllide a + oxidized 2[4Fe-4S]-[ferredoxin] + 2 ADP + 2 phosphate = protochlorophyllide a + reduced 2[4Fe-4S]-[ferredoxin] + 2 ATP + 2 H2O. It participates in porphyrin-containing compound metabolism; chlorophyll biosynthesis (light-independent). Functionally, component of the dark-operative protochlorophyllide reductase (DPOR) that uses Mg-ATP and reduced ferredoxin to reduce ring D of protochlorophyllide (Pchlide) to form chlorophyllide a (Chlide). This reaction is light-independent. The L component serves as a unique electron donor to the NB-component of the complex, and binds Mg-ATP. The protein is Light-independent protochlorophyllide reductase iron-sulfur ATP-binding protein of Prochlorococcus marinus (strain MIT 9303).